Reading from the N-terminus, the 496-residue chain is Probable cytosol aminopeptidase (496 aa).

Residues Lys-258 and Asp-263 each contribute to the Mn(2+) site. Lys-270 is an active-site residue. Mn(2+)-binding residues include Asp-281, Asp-340, and Glu-342. Residue Arg-344 is part of the active site.

The protein belongs to the peptidase M17 family. The cofactor is Mn(2+).

The protein resides in the cytoplasm. The enzyme catalyses Release of an N-terminal amino acid, Xaa-|-Yaa-, in which Xaa is preferably Leu, but may be other amino acids including Pro although not Arg or Lys, and Yaa may be Pro. Amino acid amides and methyl esters are also readily hydrolyzed, but rates on arylamides are exceedingly low.. The catalysed reaction is Release of an N-terminal amino acid, preferentially leucine, but not glutamic or aspartic acids.. Functionally, presumably involved in the processing and regular turnover of intracellular proteins. Catalyzes the removal of unsubstituted N-terminal amino acids from various peptides. This Helicobacter pylori (strain G27) protein is Probable cytosol aminopeptidase.